The chain runs to 94 residues: DNA-binding protein HU (94 aa).

The tract at residues 56-94 (QKGKEGKVPGSDKTYKTEDKRVPKFKPGKTLKQKVEEGK) is disordered. The segment covering 68 to 77 (KTYKTEDKRV) has biased composition (basic and acidic residues). Positions 78–87 (PKFKPGKTLK) are enriched in basic residues.

The protein belongs to the bacterial histone-like protein family. As to quaternary structure, homodimer.

In terms of biological role, histone-like DNA-binding protein which is capable of wrapping DNA to stabilize it, and thus to prevent its denaturation under extreme environmental conditions. In Helicobacter pylori (strain ATCC 700392 / 26695) (Campylobacter pylori), this protein is DNA-binding protein HU (hup).